The primary structure comprises 176 residues: Cytochrome b561 homolog 1 (176 aa).

The Cytoplasmic portion of the chain corresponds to 1–7 (MNRFSKT). The chain crosses the membrane as a helical span at residues 8–28 (QIYLHWITLLFVAITYAAMEL). His-12 contributes to the heme b binding site. The Periplasmic portion of the chain corresponds to 29-45 (RGWFPKGSSTYLLMRET). His-46 contacts heme b. Residues 46 to 63 (HYNAGIFVWVLMFSRLII) form a helical membrane-spanning segment. Residues 64–85 (KHRYSDPSIVPPPPAWQMKAAS) lie on the Cytoplasmic side of the membrane. The chain crosses the membrane as a helical span at residues 86 to 106 (LMHIMLYITFLALPLLGIALM). Residues 107–141 (AYSGKSWSFLGFNVSPFVTPNSEIKALIKNIHETW) are Periplasmic-facing. His-138 and His-152 together coordinate heme b. Residues 142 to 162 (ANIGYFLIAAHAGAALFHHYI) traverse the membrane as a helical segment. Over 163–176 (QKDNTLLRMMPRRK) the chain is Cytoplasmic.

The protein belongs to the cytochrome b561 family. Heme b serves as cofactor.

It is found in the cell inner membrane. The protein is Cytochrome b561 homolog 1 (yodB) of Escherichia coli (strain K12).